The primary structure comprises 240 residues: 4-hydroxy-tetrahydrodipicolinate reductase (240 aa).

Residues 79–81 and 103–106 contribute to the NAD(+) site; these read ATT and SANM. His135 functions as the Proton donor/acceptor in the catalytic mechanism. (S)-2,3,4,5-tetrahydrodipicolinate is bound at residue His136. Catalysis depends on Lys139, which acts as the Proton donor. 145 to 146 provides a ligand contact to (S)-2,3,4,5-tetrahydrodipicolinate; the sequence is GT.

Belongs to the DapB family.

The protein resides in the cytoplasm. It catalyses the reaction (S)-2,3,4,5-tetrahydrodipicolinate + NAD(+) + H2O = (2S,4S)-4-hydroxy-2,3,4,5-tetrahydrodipicolinate + NADH + H(+). The enzyme catalyses (S)-2,3,4,5-tetrahydrodipicolinate + NADP(+) + H2O = (2S,4S)-4-hydroxy-2,3,4,5-tetrahydrodipicolinate + NADPH + H(+). It participates in amino-acid biosynthesis; L-lysine biosynthesis via DAP pathway; (S)-tetrahydrodipicolinate from L-aspartate: step 4/4. Its function is as follows. Catalyzes the conversion of 4-hydroxy-tetrahydrodipicolinate (HTPA) to tetrahydrodipicolinate. This Staphylococcus aureus (strain Mu3 / ATCC 700698) protein is 4-hydroxy-tetrahydrodipicolinate reductase.